The sequence spans 123 residues: 13 kDa major membrane protein (123 aa).

The protein resides in the cell membrane. The chain is 13 kDa major membrane protein from Francisella tularensis subsp. holarctica (strain LVS).